A 279-amino-acid chain; its full sequence is Eukaryotic translation initiation factor 3 subunit G (279 aa).

Disordered stretches follow at residues 1–26 (MSTGLLDSWADAGDEFSAPPEVIANP), 66–115 (RKNW…KAHE), and 152–171 (TPSGTTPEPTSEGGAGAAGA). Ser-78 is modified (phosphoserine). The segment covering 102 to 115 (KQDEKKEEEDKAHE) has biased composition (basic and acidic residues). Residues 152–163 (TPSGTTPEPTSE) show a composition bias toward low complexity. Positions 197-276 (TTLKVSQLNS…LILHLEWSKK (80 aa)) constitute an RRM domain.

Belongs to the eIF-3 subunit G family. As to quaternary structure, component of the eukaryotic translation initiation factor 3 (eIF-3) complex.

The protein localises to the cytoplasm. Functionally, RNA-binding component of the eukaryotic translation initiation factor 3 (eIF-3) complex, which is involved in protein synthesis of a specialized repertoire of mRNAs and, together with other initiation factors, stimulates binding of mRNA and methionyl-tRNAi to the 40S ribosome. The eIF-3 complex specifically targets and initiates translation of a subset of mRNAs involved in cell proliferation. This subunit can bind 18S rRNA. The sequence is that of Eukaryotic translation initiation factor 3 subunit G from Candida albicans (strain SC5314 / ATCC MYA-2876) (Yeast).